A 490-amino-acid chain; its full sequence is MSRYGLQQLYINGAYVDSTGDDTFDAVNPANGEIIAQLQSATVADVDRAVIAAAAGQKIWAAMTAMERSRILRRAVDILRERNDELALLETHDTGKPLSETRTVDIVTGADVLEYYAGLIPMLEGQQIPLRDTSFAYTRREPLGVVAGIGAWNYPIQIALWKSAPALAAGNAMIFKPSEVTSLTALKLAEVYTEAGLPAGVFNVLTGTGQSVGQALTTHPGIAKVSFTGGIASGKTVMANAAGSTLKDVTMELGGKSPLIVFEDADLDKAADIAMMANFFSSGQVCTNGTRVFVPQALQTQFEEKILARVQRIRIGNPTDEAVNFGPLVSFPHRESVLRYIESGKREGARVLVGGEPMTDEKYAQGAFVAPTVFTDCRDDMKIVREEIFGPVMSILTYQNEDEVIRRANDSEYGLAAGVVTGDLNRAHRVIHQLEAGICWINTWGESPAEMPVGGYKHSGVGRENGITTLEHYTQIKSVQVELGEFRSVF.

D93 serves as a coordination point for K(+). 150 to 152 (GAW) is an NAD(+) binding site. K162 (charge relay system) is an active-site residue. Position 176–179 (176–179 (KPSE)) interacts with NAD(+). V180 serves as a coordination point for K(+). Residue 230–233 (GIAS) coordinates NAD(+). L246 serves as a coordination point for K(+). The active-site Proton acceptor is the E252. The NAD(+) site is built by G254, C286, and E387. C286 acts as the Nucleophile in catalysis. C286 carries the cysteine sulfenic acid (-SOH) modification. Residues K457 and G460 each contribute to the K(+) site. The active-site Charge relay system is the E464.

It belongs to the aldehyde dehydrogenase family. In terms of assembly, dimer of dimers. It depends on K(+) as a cofactor.

It carries out the reaction betaine aldehyde + NAD(+) + H2O = glycine betaine + NADH + 2 H(+). It participates in amine and polyamine biosynthesis; betaine biosynthesis via choline pathway; betaine from betaine aldehyde: step 1/1. Functionally, involved in the biosynthesis of the osmoprotectant glycine betaine. Catalyzes the irreversible oxidation of betaine aldehyde to the corresponding acid. This is Betaine aldehyde dehydrogenase from Pectobacterium carotovorum subsp. carotovorum (strain PC1).